The primary structure comprises 810 residues: Abnormal pharyngeal pumping eat-20 (810 aa).

An N-terminal signal peptide occupies residues 1-20 (MTTFCRVLLIFGIYVAVCCA). Residues 21–748 (QSVEDDVFHF…GKQSSAAASW (728 aa)) lie on the Extracellular side of the membrane. N-linked (GlcNAc...) asparagine glycosylation is found at asparagine 90, asparagine 171, and asparagine 232. 3 consecutive EGF-like domains span residues 220–257 (PPSPCANHECHNNGTCLVSQEGAATCLCRNGFTGDRCE), 258–293 (LDVCSSVPCQNGGVCRSNNGIAYCECPPAFTGLLCE), and 301–335 (VAPICRPECSNGQCVFKDGQAQCECRQGFTGANCN). Cystine bridges form between cysteine 224–cysteine 235, cysteine 229–cysteine 245, cysteine 247–cysteine 256, cysteine 261–cysteine 272, cysteine 266–cysteine 281, cysteine 283–cysteine 292, cysteine 305–cysteine 314, cysteine 309–cysteine 323, and cysteine 325–cysteine 334. Asparagine 371 is a glycosylation site (N-linked (GlcNAc...) asparagine). Residues 522-531 (FAPTTGTQQP) are compositionally biased toward low complexity. 2 disordered regions span residues 522–567 (FAPT…STMQ) and 684–738 (PHPQ…HTSS). Residues 542-558 (DENEEEEEEETTEETEE) are compositionally biased toward acidic residues. A helical transmembrane segment spans residues 749–769 (IIAIIALIVLGLLLLATSLFI). Residues 770 to 810 (LRYIRQSRKLHGKYNPAREEHNLSAAYAMPMSHIAKEERLI) are Cytoplasmic-facing.

In terms of tissue distribution, highly expressed in the pharynx, circumpharyngeal cells, pharyngeal-intestinal valve and a subset of neurons in larval and embryonic stages. Also moderately expressed in the lining of the intestine, coelomocytes, labial process bundles and some hypodermal cells. In adults, it is predominantly expressed in the pharynx, the pharyngeal-intenstinal valve, some circumpharyngeal cells, m3, m4 and m6 pharyngeal muscles, and IL1, OLQ, BAG and ALN neurons. Weaker expression is observed in labial process bundles, coelomocytes, the ventral hypodermal ridge, the vulval hypodermis and the sensory rays of the adult male tail.

It is found in the membrane. In terms of biological role, regulates pharyngeal pumping during feeding. This chain is Abnormal pharyngeal pumping eat-20 (eat-20), found in Caenorhabditis elegans.